The chain runs to 213 residues: Kynurenine formamidase (213 aa).

W15 is a substrate binding site. Residues H45, H49, and D51 each contribute to the Zn(2+) site. The active-site Proton donor/acceptor is H55. Zn(2+) is bound by residues H157 and E169.

Belongs to the Cyclase 1 superfamily. KynB family. As to quaternary structure, homodimer. Requires Zn(2+) as cofactor.

It catalyses the reaction N-formyl-L-kynurenine + H2O = L-kynurenine + formate + H(+). The protein operates within amino-acid degradation; L-tryptophan degradation via kynurenine pathway; L-kynurenine from L-tryptophan: step 2/2. Catalyzes the hydrolysis of N-formyl-L-kynurenine to L-kynurenine, the second step in the kynurenine pathway of tryptophan degradation. The protein is Kynurenine formamidase of Deinococcus geothermalis (strain DSM 11300 / CIP 105573 / AG-3a).